Here is a 578-residue protein sequence, read N- to C-terminus: MTTGGLVDENDGAAMRPLRHTLSQLRLHELLVEVQDRVEQIVEGRDRLDGLVEAMLVVTAGLDLEATLRAIVHSATSLVDARYGAMEVHDRQHRVLHFVYEGIDEETVRRIGHLPKGLGVIGLLIEDPKPLRLDDVSAHPASIGFPPYHPPMRTFLGVPVRVRDESFGTLYLTDKTNGQPFSDDDEVLVQALAAAAGIAVANARLYQQAKARQSWIEATRDIATELLSGTEPATVFRLVAAEALKLTAADAALVAVPVDEDMPAADVGELLVIETVGSAVASIVGRTIPVAGAVLREVFVNGIPRRVDRVDLEGLDELADAGPALLLPLRARGTVAGVVVVLSQGGPGAFTDEQLEMMAAFADQAALAWQLATSQRRMRELDVLTDRDRIARDLHDHVIQRLFAIGLALQGAVPHERNPEVQQRLSDVVDDLQDVIQEIRTTIYDLHGASQGITRLRQRIDAAVAQFADSGLRTSVQFVGPLSVVDSALADQAEAVVREAVSNAVRHAKASTLTVRVKVDDDLCIEVTDNGRGLPDEFTGSGLTNLRQRAEQAGGEFTLASVPGASGTVLRWSAPLSQ.

GAF domains are found at residues 63-200 (DLEA…GIAV) and 231-369 (EPAT…ALAW). H149 is a heme binding site. The Histidine kinase domain maps to 383–578 (VLTDRDRIAR…VLRWSAPLSQ (196 aa)). H395 is modified (phosphohistidine; by autocatalysis).

Mg(2+) serves as cofactor. Heme is required as a cofactor.

Its subcellular location is the cytoplasm. The catalysed reaction is ATP + protein L-histidine = ADP + protein N-phospho-L-histidine.. Functionally, member of the two-component regulatory system DevR/DevS (DosR/DosS) involved in onset of the dormancy response. Regulates an approximately 48-member regulon. Required for full induction of the DevR (DosR) regulon; acts later than DosT to positively regulate expression of the DevR regulon during adaptation to anaerobiosis. Characterized as an oxygen sensor; O(2) acts as a switch, with O(2)-bound Fe(2+) protein inactive in autophosphorylation. Has also been suggested to act as a redox sensor, or perhaps as a dual oxygen/redox sensor. Donates a phosphate group to transcriptional regulator DevR (DosR). In Mycobacterium tuberculosis (strain CDC 1551 / Oshkosh), this protein is Oxygen sensor histidine kinase response regulator DevS/DosS (devS).